The sequence spans 114 residues: T cell receptor alpha variable 12-3 (114 aa).

The signal sequence occupies residues M1–S21. The Ig-like domain occupies K24–S114. An N-linked (GlcNAc...) asparagine glycan is attached at N44. Cysteines 45 and 111 form a disulfide.

Alpha-beta TR is a heterodimer composed of an alpha and beta chain; disulfide-linked. The alpha-beta TR is associated with the transmembrane signaling CD3 coreceptor proteins to form the TR-CD3 (TcR or TCR). The assembly of alpha-beta TR heterodimers with CD3 occurs in the endoplasmic reticulum where a single alpha-beta TR heterodimer associates with one CD3D-CD3E heterodimer, one CD3G-CD3E heterodimer and one CD247 homodimer forming a stable octameric structure. CD3D-CD3E and CD3G-CD3E heterodimers preferentially associate with TR alpha and TR beta chains, respectively. The association of the CD247 homodimer is the last step of TcR assembly in the endoplasmic reticulum and is required for transport to the cell surface.

It localises to the cell membrane. V region of the variable domain of T cell receptor (TR) alpha chain that participates in the antigen recognition. Alpha-beta T cell receptors are antigen specific receptors which are essential to the immune response and are present on the cell surface of T lymphocytes. Recognize peptide-major histocompatibility (MH) (pMH) complexes that are displayed by antigen presenting cells (APC), a prerequisite for efficient T cell adaptive immunity against pathogens. Binding of alpha-beta TR to pMH complex initiates TR-CD3 clustering on the cell surface and intracellular activation of LCK that phosphorylates the ITAM motifs of CD3G, CD3D, CD3E and CD247 enabling the recruitment of ZAP70. In turn ZAP70 phosphorylates LAT, which recruits numerous signaling molecules to form the LAT signalosome. The LAT signalosome propagates signal branching to three major signaling pathways, the calcium, the mitogen-activated protein kinase (MAPK) kinase and the nuclear factor NF-kappa-B (NF-kB) pathways, leading to the mobilization of transcription factors that are critical for gene expression and essential for T cell growth and differentiation. The T cell repertoire is generated in the thymus, by V-(D)-J rearrangement. This repertoire is then shaped by intrathymic selection events to generate a peripheral T cell pool of self-MH restricted, non-autoaggressive T cells. Post-thymic interaction of alpha-beta TR with the pMH complexes shapes TR structural and functional avidity. The sequence is that of T cell receptor alpha variable 12-3 from Homo sapiens (Human).